We begin with the raw amino-acid sequence, 448 residues long: Pre-mRNA-splicing factor SAD1 (448 aa).

Met-1 bears the N-acetylmethionine mark. Residues 27 to 124 (PNYAYLETVV…NSIKFAAYPT (98 aa)) form a UBP-type; degenerate zinc finger. Positions 60, 63, 79, and 85 each coordinate Zn(2+). Positions 150 to 447 (IGFTNAATYD…ETFIQVWEKQ (298 aa)) constitute a USP domain.

As to quaternary structure, component of the 45S U1.U2.U4/U6.U5 penta-snRNP particle, a subcomplex of the spliceosome.

The protein localises to the nucleus. Promotes the assembly of newly synthesized U4 snRNA into the U4/U6 snRNP particle. Required for splicing of pre-mRNA. The chain is Pre-mRNA-splicing factor SAD1 (SAD1) from Saccharomyces cerevisiae (strain ATCC 204508 / S288c) (Baker's yeast).